A 269-amino-acid chain; its full sequence is uncharacterized protein (269 aa).

The protein belongs to the methyltransferase superfamily.

This is an uncharacterized protein from Mycobacterium leprae (strain Br4923).